An 80-amino-acid chain; its full sequence is Cell division activator CedA (80 aa).

This sequence belongs to the CedA family.

Activates the cell division inhibited by chromosomal DNA over-replication. The chain is Cell division activator CedA from Salmonella typhimurium (strain LT2 / SGSC1412 / ATCC 700720).